Here is a 179-residue protein sequence, read N- to C-terminus: Replication restart protein DnaT (179 aa).

Positions 151-168 (SRSSNGGMPQRDINSVSE) are enriched in polar residues. The interval 151–179 (SRSSNGGMPQRDINSVSEPDNHIPPGFRG) is disordered.

Belongs to the DnaT family. As to quaternary structure, homooligomerizes. Interacts with PriB. Component of the replication restart primosome. Primosome assembly occurs via a 'hand-off' mechanism. PriA binds to replication forks, subsequently PriB then DnaT bind; DnaT then displaces ssDNA to generate the helicase loading substrate.

Involved in the restart of stalled replication forks, which reloads the replicative helicase on sites other than the origin of replication. Can function in multiple replication restart pathways. Displaces ssDNA from a PriB-ssDNA complex. Probably forms a spiral filament on ssDNA. The protein is Replication restart protein DnaT of Salmonella heidelberg (strain SL476).